The chain runs to 274 residues: Lipid phosphate phosphatase 1 (274 aa).

At 1 to 15 (MISVMADEKHKEYFK) the chain is on the lumenal side. The chain crosses the membrane as a helical span at residues 16–33 (LYYFQYMIIGLCTILFLY). Residues 34-69 (SEISLVPRGQNIEFSLDDPSISKRYVPNELVGPLEC) are Cytoplasmic-facing. The helical transmembrane segment at 70 to 87 (LILSVGLSNMVVFWTCMF) threads the bilayer. Residues 88 to 117 (DKDLLKKNRVKRLRERPDGISNDFHFMHTS) lie on the Lumenal side of the membrane. Residues 118–139 (ILCLMLIISINAALTGALKLII) form a helical membrane-spanning segment. Positions 136 to 144 (KLIIGNLRP) are phosphatase sequence motif I. At 140–189 (GNLRPDFVDRCIPDLQKMSDSDSLVFGLDICKQTNKWILYEGLKSTPSGH) the chain is on the cytoplasmic side. The phosphatase sequence motif II stretch occupies residues 186–189 (PSGH). A helical membrane pass occupies residues 190–203 (SSFIVSTMGFTYLW). Topologically, residues 204 to 214 (QRVFTTRNTRS) are lumenal. The helical transmembrane segment at 215–231 (CIWCPLLALVVMVSRVI) threads the bilayer. The tract at residues 228 to 239 (SRVIDHRHHWYD) is phosphatase sequence motif III. Residues 232-237 (DHRHHW) are Cytoplasmic-facing. The chain crosses the membrane as a helical span at residues 238-255 (YDVVSGAVLAFLVIYCCW). The Lumenal segment spans residues 256–274 (KWTFTNLAKRDILPSPVSV).

The protein belongs to the PA-phosphatase related phosphoesterase family.

It is found in the golgi apparatus membrane. The catalysed reaction is a 1,2-diacyl-sn-glycerol 3-diphosphate + H2O = a 1,2-diacyl-sn-glycero-3-phosphate + phosphate + H(+). The enzyme catalyses a 1,2-diacyl-sn-glycero-3-phosphate + H2O = a 1,2-diacyl-sn-glycerol + phosphate. It catalyses the reaction a 1-acyl-sn-glycero-3-phosphate + H2O = a 1-acyl-sn-glycerol + phosphate. PA phosphatase activity is magnesium ion-independent and potently inhibited by N-ethylmaleimide. Also inhibited by phenylglyoxal and propranolol. Functionally, catalyzes the dephosphorylation of diacylglycerol diphosphate (DGPP) to phosphatidate (PA) and the subsequent dephosphorylation of PA to diacylglycerol (DAG). Together with DPP1, regulates intracellular DGPP and PA levels which are phospholipid molecules believed to play a signaling role in stress response. Can also use lysophosphatidic acid (LPA) as a substrate. Substrate preference is PA &gt; DGPP &gt; LPA. The chain is Lipid phosphate phosphatase 1 (LPP1) from Saccharomyces cerevisiae (strain ATCC 204508 / S288c) (Baker's yeast).